Here is a 459-residue protein sequence, read N- to C-terminus: V-type ATP synthase beta chain (459 aa).

Belongs to the ATPase alpha/beta chains family.

Its function is as follows. Produces ATP from ADP in the presence of a proton gradient across the membrane. The V-type beta chain is a regulatory subunit. The polypeptide is V-type ATP synthase beta chain (Thermoanaerobacter pseudethanolicus (strain ATCC 33223 / 39E) (Clostridium thermohydrosulfuricum)).